The chain runs to 1328 residues: WASH complex subunit 2 (1328 aa).

A sufficient for interaction with WASHC3, WASHC4 and WASHC5; required for interaction with WASHC1 region spans residues 1-219; sequence MNRTSPDSEQ…VGSDRGSIVD (219 aa). Residues serine 157, serine 159, serine 204, serine 205, and serine 209 each carry the phosphoserine modification. Residues 201–213 are compositionally biased toward low complexity; sequence GELSSEEGSVGSD. 2 disordered regions span residues 201 to 655 and 675 to 830; these read GELS…KTNL and KKTQ…PKST. Acidic residues-rich tracts occupy residues 219-231 and 248-273; these read DSEDEKEEEESDD and SDEEEDDDADLFADSEKEGDDIEDIE. Position 283 is a phosphoserine (serine 283). The segment covering 288 to 323 has biased composition (basic and acidic residues); sequence LAARIKGDVSNQRKEGHTDGKPQRTVKEKKERRTPA. Threonine 321 carries the post-translational modification Phosphothreonine. Positions 346 to 592 are sufficient for interaction with CCDC93; it reads SRGGLFSDRQ…QTSSLPPQSQ (247 aa). Residues 347 to 1328 are interaction with VPS35; that stretch reads RGGLFSDRQG…DDPLNAFGSQ (982 aa). The LFa 1 signature appears at 357-367; sequence LFDDDDESDLF. A phosphoserine mark is found at serine 384 and serine 387. 2 short sequence motifs (LFa) span residues 440–455 and 474–483; these read LFDDDDNDSDEDDNFF and IFDDDEGDLF. The span at 441 to 453 shows a compositional bias: acidic residues; it reads FDDDDNDSDEDDN. Positions 508-528 are enriched in polar residues; sequence TITLPSSKNPKLVSETKTQKG. Short sequence motifs (LFa) lie at residues 529–540 and 564–575; these read LFSDEEDSEDLF and LFGDEDEEDNLF. Phosphoserine is present on residues serine 531 and serine 536. The segment covering 539–556 has biased composition (low complexity); the sequence is LFSSQSSSKTKSASVLSS. The span at 582–592 shows a compositional bias: polar residues; the sequence is KQTSSLPPQSQ. Serine 610 and serine 611 each carry phosphoserine. A compositionally biased stretch (basic and acidic residues) spans 627–638; the sequence is ASERKSKGERWD. 2 short sequence motifs (LFa) span residues 655–667 and 683–695; these read LFEEEDDDGVDLF and LFEDDTDSGSSLF. Over residues 690–699 the composition is skewed to polar residues; the sequence is SGSSLFSLPP. Residues serine 720, serine 744, serine 749, serine 780, and serine 795 each carry the phosphoserine modification. Residues 797–808 show a composition bias toward acidic residues; the sequence is FDEDEDKVEDDS. Short sequence motifs (LFa) lie at residues 832-840 and 849-855; these read VFQDEELLF and DPDVDLF. Disordered regions lie at residues 863 to 940 and 991 to 1088; these read LSMP…EPSS and PTLP…AMAV. Phosphoserine occurs at positions 867 and 870. The short motif at 871–881 is the LFa 10 element; sequence LFGDDDDDDLF. The span at 894–919 shows a compositional bias: basic and acidic residues; it reads PEKKGTLRKDHKPPELTEGSKEKSTW. Residues 925–1328 form an interaction with phospholipids region; sequence QDSSGLTPFK…DDPLNAFGSQ (404 aa). Over residues 1016-1034 the composition is skewed to basic residues; sequence NKGRVKVRGKRRPQTRAAR. The segment at 1017-1035 is required for interaction with F-actin-capping protein subunit alpha (CAPZA1 or CAPZA2 or CAPZA3); the sequence is KGRVKVRGKRRPQTRAARR. Phosphoserine is present on residues serine 1042, serine 1060, serine 1077, and serine 1102. Positions 1115-1210 are disordered; that stretch reads AHLFDSGDIF…KKNQWKSDSH (96 aa). Short sequence motifs (LFa) lie at residues 1117 to 1124, 1157 to 1171, and 1187 to 1195; these read LFDSGDIF, VFPDLSEASGVDDLF, and LLEDEEDLF. Serine 1162 and serine 1165 each carry phosphoserine. The span at 1196–1210 shows a compositional bias: basic and acidic residues; sequence ADQKGKKNQWKSDSH. 3 consecutive short sequence motifs (LFa) follow at residues 1220–1226, 1249–1257, and 1277–1286; these read IFEDDIF, LFDDNIDIF, and MFDDDTDDIF. The disordered stretch occupies residues 1289 to 1310; sequence GLQAKASKPKSQSAEAVSELRS. The LFa 17 signature appears at 1317–1325; that stretch reads IFDDPLNAF. Serine 1327 carries the post-translational modification Phosphoserine.

Belongs to the FAM21 family. In terms of assembly, component of the WASH core complex also described as WASH regulatory complex (SHRC) composed of WASHC1, WASHC2, WASHC3, WASHC4 and WASHC5; in the complex interacts (via N-terminus) directly with WASHC1. The WASH core complex associates with the F-actin-capping protein dimer (formed by CAPZA1, CAPZA2 or CAPZA3 and CAPZB) in a transient or substoichiometric manner which was initially described as WASH complex. Interacts with VPS35; mediates the association with the retromer CSC complex. Interacts with FKBP15. Interacts with CCDC93, CCDC22, VPS35L; indicative for an association of the WASH core complex with the CCC and retriever complexes. Directly interacts with TBC1D23.

Its subcellular location is the early endosome membrane. The protein resides in the cell membrane. Functionally, acts as a component of the WASH core complex that functions as a nucleation-promoting factor (NPF) at the surface of endosomes, where it recruits and activates the Arp2/3 complex to induce actin polymerization, playing a key role in the fission of tubules that serve as transport intermediates during endosome sorting. Mediates the recruitment of the WASH core complex to endosome membranes via binding to phospholipids and VPS35 of the retromer CSC. Mediates the recruitment of the F-actin-capping protein dimer to the WASH core complex probably promoting localized F-actin polymerization needed for vesicle scission. Via its C-terminus binds various phospholipids, most strongly phosphatidylinositol 4-phosphate (PtdIns-(4)P), phosphatidylinositol 5-phosphate (PtdIns-(5)P) and phosphatidylinositol 3,5-bisphosphate (PtdIns-(3,5)P2). Involved in the endosome-to-plasma membrane trafficking and recycling of SNX27-retromer-dependent cargo proteins, such as GLUT1. Required for the association of DNAJC13, ENTR1, ANKRD50 with retromer CSC subunit VPS35. Required for the endosomal recruitment of CCC and retriever complexes subunits COMMD1 and CCDC93 as well as the retrievere complex subunit VPS35L. This chain is WASH complex subunit 2, found in Rattus norvegicus (Rat).